A 1075-amino-acid chain; its full sequence is Paired amphipathic helix protein pst2 (1075 aa).

PAH domains are found at residues 28 to 102 (SPNG…LPSS), 138 to 208 (LPCT…LPSS), and 243 to 319 (RPDN…TSLS). Phosphoserine occurs at positions 641 and 643. A disordered region spans residues 647–700 (LTEFVKQPKINGQRESRSAAAARKKEESGNKSQSNSQNSLSDESGNVTPVSKKQ). Basic and acidic residues predominate over residues 658–675 (GQRESRSAAAARKKEESG). Over residues 676–691 (NKSQSNSQNSLSDESG) the composition is skewed to low complexity.

In terms of assembly, heterotetramer of alp13, clr6, prw1 and pst2.

It localises to the nucleus. In terms of biological role, has a role in chromatin assembly and chromosome segregation. Involved in the deacetylation of histones. This is Paired amphipathic helix protein pst2 (pst2) from Schizosaccharomyces pombe (strain 972 / ATCC 24843) (Fission yeast).